Consider the following 461-residue polypeptide: Ribulose bisphosphate carboxylase (461 aa).

Asn-113 serves as a coordination point for substrate. Lys-168 acts as the Proton acceptor in catalysis. Residue Lys-170 participates in substrate binding. Mg(2+) is bound by residues Lys-193, Asp-195, and Glu-196. Lys-193 carries the N6-carboxylysine modification. The Proton acceptor role is filled by His-289. The substrate site is built by Arg-290, His-323, and Ser-370.

Belongs to the RuBisCO large chain family. Type II subfamily. As to quaternary structure, homodimer. Mg(2+) is required as a cofactor.

It catalyses the reaction 2 (2R)-3-phosphoglycerate + 2 H(+) = D-ribulose 1,5-bisphosphate + CO2 + H2O. The catalysed reaction is D-ribulose 1,5-bisphosphate + O2 = 2-phosphoglycolate + (2R)-3-phosphoglycerate + 2 H(+). Its function is as follows. RuBisCO catalyzes two reactions: the carboxylation of D-ribulose 1,5-bisphosphate, the primary event in carbon dioxide fixation, as well as the oxidative fragmentation of the pentose substrate. Both reactions occur simultaneously and in competition at the same active site. The polypeptide is Ribulose bisphosphate carboxylase (Thiomonas intermedia (strain K12) (Thiobacillus intermedius)).